Consider the following 447-residue polypeptide: Tryptophan synthase beta chain (447 aa).

N6-(pyridoxal phosphate)lysine is present on Lys92. The tract at residues 408-447 is disordered; the sequence is GLAVKGGEQPKEFSDGPPLGKLAPSGGSAVREATSVGARK.

It belongs to the TrpB family. In terms of assembly, tetramer of two alpha and two beta chains. The cofactor is pyridoxal 5'-phosphate.

The catalysed reaction is (1S,2R)-1-C-(indol-3-yl)glycerol 3-phosphate + L-serine = D-glyceraldehyde 3-phosphate + L-tryptophan + H2O. The protein operates within amino-acid biosynthesis; L-tryptophan biosynthesis; L-tryptophan from chorismate: step 5/5. Its function is as follows. The beta subunit is responsible for the synthesis of L-tryptophan from indole and L-serine. The chain is Tryptophan synthase beta chain from Polaromonas sp. (strain JS666 / ATCC BAA-500).